A 460-amino-acid polypeptide reads, in one-letter code: MKKNAKMKAPTATKTAAKTPVVDYRVSKEAMENPEVFAKLAKWGREEIKIAETEMPGLMALRKEYKKQQPLKGARIAGCLHMTIQTAVLIETLVELGAEIRWSSCNIFSTQDHAAAAIAAAGIPVFAWKGLTEQEFNWCIEQTIVGWGKEGFNMILDDGGDLTNMMHEPRFAKEMKKIIGISEETTTGVHNLEVLVKQGKLKVPAININDSVTKSKFDNLYGCRESLADGIKRATDVMVAGKICVVAGYGDVGKGSAHSLRGLGARVLVTEIDPICALQAAMEGFEVTTMEDAAPLGDIFVTATGCCDIITDKHFMKMKNNAIVCNIGHFDIEIDMAWLNKNSKMREVKPQVDIHTLKNGKQVIILAKGRLVNLGCATGHPSFVMSNSFTNQVLAQMELFNNRDKYQDIAVYRLPKHLDEKVAALHLDKLGVKLTKLSSKQAKYLHMSPQGPFKPEHYRY.

Thr-83, Asp-158, and Glu-184 together coordinate substrate. 185-187 (TTT) is a binding site for NAD(+). Residues Lys-214 and Asp-218 each coordinate substrate. NAD(+) is bound by residues Asn-219, 248–253 (GYGDVG), Glu-271, 327–329 (IGH), and Asn-373.

The protein belongs to the adenosylhomocysteinase family. The cofactor is NAD(+).

The protein localises to the cytoplasm. The catalysed reaction is S-adenosyl-L-homocysteine + H2O = L-homocysteine + adenosine. It participates in amino-acid biosynthesis; L-homocysteine biosynthesis; L-homocysteine from S-adenosyl-L-homocysteine: step 1/1. Its function is as follows. May play a key role in the regulation of the intracellular concentration of adenosylhomocysteine. The sequence is that of Adenosylhomocysteinase from Bdellovibrio bacteriovorus (strain ATCC 15356 / DSM 50701 / NCIMB 9529 / HD100).